Reading from the N-terminus, the 37-residue chain is Cytochrome b6-f complex subunit 5 (37 aa).

Residues 5 to 25 (LLSGIVLGLITVSALGLFVAA) traverse the membrane as a helical segment.

This sequence belongs to the PetG family. As to quaternary structure, the 4 large subunits of the cytochrome b6-f complex are cytochrome b6, subunit IV (17 kDa polypeptide, PetD), cytochrome f and the Rieske protein, while the 4 small subunits are PetG, PetL, PetM and PetN. The complex functions as a dimer.

It localises to the plastid. The protein resides in the chloroplast thylakoid membrane. Its function is as follows. Component of the cytochrome b6-f complex, which mediates electron transfer between photosystem II (PSII) and photosystem I (PSI), cyclic electron flow around PSI, and state transitions. PetG is required for either the stability or assembly of the cytochrome b6-f complex. This Phaeodactylum tricornutum (strain CCAP 1055/1) protein is Cytochrome b6-f complex subunit 5.